A 392-amino-acid polypeptide reads, in one-letter code: DNA replication and repair protein RecF (392 aa).

30–37 (GRNGFGKT) contacts ATP.

Belongs to the RecF family.

It is found in the cytoplasm. The RecF protein is involved in DNA metabolism; it is required for DNA replication and normal SOS inducibility. RecF binds preferentially to single-stranded, linear DNA. It also seems to bind ATP. The protein is DNA replication and repair protein RecF of Corynebacterium aurimucosum (strain ATCC 700975 / DSM 44827 / CIP 107346 / CN-1) (Corynebacterium nigricans).